The primary structure comprises 428 residues: MDVVDSLLVNGSNITPPCELGLENETLFCLDQPRPSKEWQPAVQILLYSLIFLLSVLGNTLVITVLIRNKRMRTVTNIFLLSLAVSDLMLCLFCMPFNLIPNLLKDFIFGSAVCKTTTYFMGTSVSVSTFNLVAISLERYGAICKPLQSRVWQTKSHALKVIAATWCLSFTIMTPYPIYSNLVPFTKNNNQTANMCRFLLPNDVMQQSWHTFLLLILFLIPGIVMMVAYGLISLELYQGIKFEASQKKSAKERKPSTTSSGKYEDSDGCYLQKTRPPRKLELRQLSTGSSSRANRIRSNSSAANLMAKKRVIRMLIVIVVLFFLCWMPIFSANAWRAYDTASAERRLSGTPISFILLLSYTSSCVNPIIYCFMNKRFRLGFMATFPCCPNPGPPGARGEVGEEEEGGTTGASLSRFSYSHMSASVPPQ.

Residues 1–41 are Extracellular-facing; the sequence is MDVVDSLLVNGSNITPPCELGLENETLFCLDQPRPSKEWQP. N10 and N24 each carry an N-linked (GlcNAc...) asparagine glycan. Residues C18 and C29 are joined by a disulfide bond. The chain crosses the membrane as a helical span at residues 42–67; sequence AVQILLYSLIFLLSVLGNTLVITVLI. The Cytoplasmic segment spans residues 68 to 77; the sequence is RNKRMRTVTN. A helical membrane pass occupies residues 78-104; that stretch reads IFLLSLAVSDLMLCLFCMPFNLIPNLL. Topologically, residues 105-115 are extracellular; the sequence is KDFIFGSAVCK. C114 and C196 are disulfide-bonded. A helical membrane pass occupies residues 116–137; it reads TTTYFMGTSVSVSTFNLVAISL. Over 138-157 the chain is Cytoplasmic; that stretch reads ERYGAICKPLQSRVWQTKSH. The helical transmembrane segment at 158-178 threads the bilayer; sequence ALKVIAATWCLSFTIMTPYPI. Residues 179–210 lie on the Extracellular side of the membrane; the sequence is YSNLVPFTKNNNQTANMCRFLLPNDVMQQSWH. Residue N190 is glycosylated (N-linked (GlcNAc...) asparagine). A helical membrane pass occupies residues 211–234; that stretch reads TFLLLILFLIPGIVMMVAYGLISL. At 235 to 313 the chain is on the cytoplasmic side; that stretch reads ELYQGIKFEA…NLMAKKRVIR (79 aa). The interval 248–272 is disordered; it reads KSAKERKPSTTSSGKYEDSDGCYLQ. Residues 314 to 334 form a helical membrane-spanning segment; it reads MLIVIVVLFFLCWMPIFSANA. At 335–349 the chain is on the extracellular side; sequence WRAYDTASAERRLSG. The chain crosses the membrane as a helical span at residues 350–373; sequence TPISFILLLSYTSSCVNPIIYCFM. At 374–428 the chain is on the cytoplasmic side; the sequence is NKRFRLGFMATFPCCPNPGPPGARGEVGEEEEGGTTGASLSRFSYSHMSASVPPQ. A lipid anchor (S-palmitoyl cysteine) is attached at C387. The interval 394–428 is disordered; it reads PGARGEVGEEEEGGTTGASLSRFSYSHMSASVPPQ. A compositionally biased stretch (polar residues) spans 411-422; the sequence is ASLSRFSYSHMS.

It belongs to the G-protein coupled receptor 1 family.

It is found in the cell membrane. Its function is as follows. Receptor for cholecystokinin. Mediates pancreatic growth and enzyme secretion, smooth muscle contraction of the gall bladder and stomach. Has a 1000-fold higher affinity for CCK rather than for gastrin. It modulates feeding and dopamine-induced behavior in the central and peripheral nervous system. This receptor mediates its action by association with G proteins that activate a phosphatidylinositol-calcium second messenger system. This chain is Cholecystokinin receptor type A (CCKAR), found in Homo sapiens (Human).